The chain runs to 309 residues: Foldase protein PrsA 2 (309 aa).

The N-terminal stretch at 1–20 (MKYRLIGVGASLVVAVMLTG) is a signal peptide. A lipid anchor (N-palmitoyl cysteine) is attached at Cys21. Cys21 is lipidated: S-diacylglycerol cysteine. Residues 137-232 (MPMTTVQHIA…TADTKDKPTY (96 aa)) form the PpiC domain.

This sequence belongs to the PrsA family.

It is found in the cell membrane. It catalyses the reaction [protein]-peptidylproline (omega=180) = [protein]-peptidylproline (omega=0). Plays a major role in protein secretion by helping the post-translocational extracellular folding of several secreted proteins. The protein is Foldase protein PrsA 2 (prsA2) of Lactiplantibacillus plantarum (strain ATCC BAA-793 / NCIMB 8826 / WCFS1) (Lactobacillus plantarum).